A 173-amino-acid chain; its full sequence is Cytochrome c-type biogenesis protein CcmE (173 aa).

At Met-1 to Arg-8 the chain is on the cytoplasmic side. The chain crosses the membrane as a helical; Signal-anchor for type II membrane protein span at residues Phe-9–Ala-29. The Periplasmic portion of the chain corresponds to Leu-30 to Lys-173. The heme site is built by His-131 and Tyr-135. The disordered stretch occupies residues Glu-139–Lys-173. Residues Ala-156–Lys-173 show a composition bias toward basic and acidic residues.

Belongs to the CcmE/CycJ family.

The protein resides in the cell inner membrane. In terms of biological role, heme chaperone required for the biogenesis of c-type cytochromes. Transiently binds heme delivered by CcmC and transfers the heme to apo-cytochromes in a process facilitated by CcmF and CcmH. This is Cytochrome c-type biogenesis protein CcmE from Haemophilus influenzae (strain 86-028NP).